A 942-amino-acid chain; its full sequence is Protein translocase subunit SecA (942 aa).

ATP is bound by residues Gln90, 108–112, and Asp509; that span reads GEGKT.

This sequence belongs to the SecA family. In terms of assembly, monomer and homodimer. Part of the essential Sec protein translocation apparatus which comprises SecA, SecYEG and auxiliary proteins SecDF. Other proteins may also be involved.

Its subcellular location is the cell inner membrane. The protein resides in the cellular thylakoid membrane. It localises to the cytoplasm. The catalysed reaction is ATP + H2O + cellular proteinSide 1 = ADP + phosphate + cellular proteinSide 2.. Part of the Sec protein translocase complex. Interacts with the SecYEG preprotein conducting channel. Has a central role in coupling the hydrolysis of ATP to the transfer of proteins into and across the cell membrane, serving as an ATP-driven molecular motor driving the stepwise translocation of polypeptide chains across the membrane. Its function is as follows. Probably participates in protein translocation into and across both the cytoplasmic and thylakoid membranes in cyanobacterial cells. The chain is Protein translocase subunit SecA from Prochlorococcus marinus (strain NATL2A).